A 187-amino-acid chain; its full sequence is UPF0340 protein stu1894 (187 aa).

This sequence belongs to the UPF0340 family.

This Streptococcus thermophilus (strain ATCC BAA-250 / LMG 18311) protein is UPF0340 protein stu1894.